Consider the following 388-residue polypeptide: Leucine aminopeptidase 1 (388 aa).

The first 19 residues, 1 to 19 (MRSSVLFSLYAATLVAAVA), serve as a signal peptide directing secretion. Residues 20 to 88 (HPKDPQIVLQ…TLNHKLSTES (69 aa)) constitute a propeptide that is removed on maturation. N-linked (GlcNAc...) asparagine glycosylation occurs at N98. Zn(2+) contacts are provided by H187, D206, E245, and D272. C321 and C325 are oxidised to a cystine. H354 contacts Zn(2+).

The protein belongs to the peptidase M28 family. M28E subfamily. As to quaternary structure, monomer. It depends on Zn(2+) as a cofactor.

Its subcellular location is the secreted. Extracellular aminopeptidase that allows assimilation of proteinaceous substrates. In Leptosphaeria maculans (strain JN3 / isolate v23.1.3 / race Av1-4-5-6-7-8) (Blackleg fungus), this protein is Leucine aminopeptidase 1 (LAP1).